Consider the following 268-residue polypeptide: Lipase 1 (268 aa).

The N-terminal stretch at 1–29 is a signal peptide; that stretch reads MRRFRLVGFLSSLVLAAGAALTGAATAQA. Residue Ser-44 is the Nucleophile of the active site. 3 disulfide bridges follow: Cys-61-Cys-86, Cys-127-Cys-135, and Cys-185-Cys-231. His-250 is a catalytic residue.

Belongs to the 'GDSL' lipolytic enzyme family. As to quaternary structure, monomer.

It localises to the secreted. The enzyme catalyses a triacylglycerol + H2O = a diacylglycerol + a fatty acid + H(+). With respect to regulation, strongly inhibited by Ag(+). The cations Ca(2+), Mg(2+), Co(2+) and Cu(2+) do not significantly reduce the lipolytic activity of SCO1725. Is also inhibited by DTT in vitro, but not by EDTA or by the reagent masking SH-groups, p-hydroxymercuribenzoate (pHMB). Is resistant to PMSF inhibition, except in the presence of Ca(2+). Is also strongly inhibited by 3,4-dichloroisocoumarin (DCI), another inhibitor of serine hydrolases. Addition of tetrahydrofuran and 1,4-dioxane significantly increases (2- and 4- fold, respectively) hydrolytic activity of lipase towards p-nitrophenyl caprylate. Catalyzes the hydrolysis of fatty acid esters with a preference for mid-length acyl chain (C10-C16). Is able to hydrolyze the triacylglycerol triolein and mixed triacylglycerols from a wide range of natural oils; better activity is obtained with corn-, wheat germ- and olive oil that have higher content of linoleic and/or oleic acid (C18:2; C18:1, cis). Tween detergents are also substrates for this enzyme. Displays arylesterase activity towards p-nitrophenyl alkanoate esters and alpha- and beta-naphthyl esters. This Streptomyces coelicolor (strain ATCC BAA-471 / A3(2) / M145) protein is Lipase 1.